A 265-amino-acid chain; its full sequence is Neuronal membrane glycoprotein M6-b (265 aa).

A helical transmembrane segment spans residues 31 to 51 (GGVPYASLVATILCFSGVALF). Asparagine 73 carries N-linked (GlcNAc...) asparagine glycosylation. 2 helical membrane passes run 90–110 (VIYG…AEGF) and 136–156 (FVFL…FSAV). An N-linked (GlcNAc...) asparagine glycan is attached at asparagine 177. The helical transmembrane segment at 224 to 244 (LFIVACAGAGATVIALLIYMM) threads the bilayer. A Phosphoserine modification is found at serine 257.

This sequence belongs to the myelin proteolipid protein family. In terms of assembly, interacts with SERT.

Its subcellular location is the membrane. It localises to the cell membrane. May be involved in neural development. Involved in regulation of osteoblast function and bone formation. Involved in matrix vesicle release by osteoblasts; this function seems to involve maintenance of the actin cytoskeleton. May be involved in cellular trafficking of SERT and thereby in regulation of serotonin uptake. The protein is Neuronal membrane glycoprotein M6-b (GPM6B) of Pongo abelii (Sumatran orangutan).